The sequence spans 22 residues: uncharacterized protein (22 aa).

Belongs to the asfivirus C84L family.

This is an uncharacterized protein from Ornithodoros (relapsing fever ticks).